The following is a 540-amino-acid chain: Chaperonin GroEL (540 aa).

Residues Thr-30–Pro-33, Lys-51, Asp-87–Thr-91, Gly-415, Asn-479–Ala-481, and Asp-495 each bind ATP.

This sequence belongs to the chaperonin (HSP60) family. In terms of assembly, forms a cylinder of 14 subunits composed of two heptameric rings stacked back-to-back. Interacts with the co-chaperonin GroES.

It localises to the cytoplasm. The catalysed reaction is ATP + H2O + a folded polypeptide = ADP + phosphate + an unfolded polypeptide.. Its function is as follows. Together with its co-chaperonin GroES, plays an essential role in assisting protein folding. The GroEL-GroES system forms a nano-cage that allows encapsulation of the non-native substrate proteins and provides a physical environment optimized to promote and accelerate protein folding. This Methylovorus sp. (strain SS1 / DSM 11726) protein is Chaperonin GroEL.